A 319-amino-acid chain; its full sequence is Cobalamin biosynthesis protein CbiB (319 aa).

4 helical membrane-spanning segments follow: residues 56 to 76 (VMWV…LALA), 82 to 102 (WFGW…RSLA), 153 to 173 (VDGI…LAMA), and 296 to 316 (LMWV…CGLS).

It belongs to the CobD/CbiB family.

It localises to the cell membrane. The protein operates within cofactor biosynthesis; adenosylcobalamin biosynthesis. Functionally, converts cobyric acid to cobinamide by the addition of aminopropanol on the F carboxylic group. However, the true cosubstrate could be (R)-1-amino-2-propanol O-2-phosphate, leading to cobinamide phosphate. This is Cobalamin biosynthesis protein CbiB from Salmonella paratyphi A (strain ATCC 9150 / SARB42).